A 50-amino-acid polypeptide reads, in one-letter code: uncharacterized protein (50 aa).

Residues M1–K50 are disordered. Positions G35–K50 are enriched in polar residues.

This is an uncharacterized protein from Treponema pallidum (strain Nichols).